A 181-amino-acid chain; its full sequence is NADH-quinone oxidoreductase subunit B (181 aa).

Cys-60, Cys-61, Cys-125, and Cys-155 together coordinate [4Fe-4S] cluster.

The protein belongs to the complex I 20 kDa subunit family. In terms of assembly, NDH-1 is composed of 14 different subunits. Subunits NuoB, C, D, E, F, and G constitute the peripheral sector of the complex. Requires [4Fe-4S] cluster as cofactor.

The protein resides in the cell inner membrane. The catalysed reaction is a quinone + NADH + 5 H(+)(in) = a quinol + NAD(+) + 4 H(+)(out). NDH-1 shuttles electrons from NADH, via FMN and iron-sulfur (Fe-S) centers, to quinones in the respiratory chain. Couples the redox reaction to proton translocation (for every two electrons transferred, four hydrogen ions are translocated across the cytoplasmic membrane), and thus conserves the redox energy in a proton gradient. The protein is NADH-quinone oxidoreductase subunit B of Novosphingobium aromaticivorans (strain ATCC 700278 / DSM 12444 / CCUG 56034 / CIP 105152 / NBRC 16084 / F199).